A 207-amino-acid chain; its full sequence is Guanylate kinase (207 aa).

Residues 6 to 185 enclose the Guanylate kinase-like domain; that stretch reads GLLIVLSGPS…AKNRIQSIVE (180 aa). An ATP-binding site is contributed by 13-20; sequence GPSGVGKG.

This sequence belongs to the guanylate kinase family.

It localises to the cytoplasm. It carries out the reaction GMP + ATP = GDP + ADP. Functionally, essential for recycling GMP and indirectly, cGMP. This chain is Guanylate kinase, found in Staphylococcus epidermidis (strain ATCC 35984 / DSM 28319 / BCRC 17069 / CCUG 31568 / BM 3577 / RP62A).